A 219-amino-acid chain; its full sequence is Small ribosomal subunit protein uS3c (219 aa).

A KH type-2 domain is found at 39 to 111; that stretch reads IRKFLMEKIK…NSFFNVKINF (73 aa).

It belongs to the universal ribosomal protein uS3 family. As to quaternary structure, part of the 30S ribosomal subunit.

It is found in the plastid. In Euglena longa (Euglenophycean alga), this protein is Small ribosomal subunit protein uS3c (rps3).